Reading from the N-terminus, the 571-residue chain is Fumarate reductase (cytochrome) (571 aa).

Positions 8, 14, 17, 18, 36, 39, 40, 52, 58, 61, 68, 71, 72, 74, 75, 82, 85, 86, 91, and 94 each coordinate heme c. The flavoprotein-like stretch occupies residues 118–571; it reads ALASAPHDTV…EEAAKYSKKN (454 aa). FAD-binding residues include Ala137, Glu156, Asn164, Ala165, Ala169, Gly170, Gly171, Gly278, and Gln338. Gly170 serves as a coordination point for succinate. The succinate site is built by His365, Thr377, and Glu378. 3 residues coordinate fumarate: Thr377, Glu378, and Arg402. Catalysis depends on Arg402, which acts as the Proton donor. Lys431 is a binding site for heme c. A succinate-binding site is contributed by His504. His504 is a binding site for fumarate. 2 residues coordinate FAD: His505 and Glu534. Residues Arg544 and Gly547 each coordinate succinate. The fumarate site is built by Arg544 and Gly547. Positions 549 and 550 each coordinate FAD.

As to quaternary structure, monomer. It depends on FAD as a cofactor. Heme c is required as a cofactor.

It is found in the periplasm. The catalysed reaction is 2 Fe(III)-[cytochrome c] + succinate = fumarate + 2 Fe(II)-[cytochrome c] + 2 H(+). Flavocytochrome that catalyzes the reduction of fumarate to succinate. Is essential for fumarate respiration during anaerobic growth, acting as the terminal reductase. Receives electrons from the membrane-bound tetraheme c-type cytochrome CymA. In vitro, can use the artificial electron donor methyl viologen. The polypeptide is Fumarate reductase (cytochrome) (fccA) (Shewanella frigidimarina).